A 154-amino-acid chain; its full sequence is Crossover junction endodeoxyribonuclease RuvC (154 aa).

Active-site residues include Asp-7, Glu-67, and Asp-139. 3 residues coordinate Mg(2+): Asp-7, Glu-67, and Asp-139.

Belongs to the RuvC family. As to quaternary structure, homodimer which binds Holliday junction (HJ) DNA. The HJ becomes 2-fold symmetrical on binding to RuvC with unstacked arms; it has a different conformation from HJ DNA in complex with RuvA. In the full resolvosome a probable DNA-RuvA(4)-RuvB(12)-RuvC(2) complex forms which resolves the HJ. Requires Mg(2+) as cofactor.

It is found in the cytoplasm. It catalyses the reaction Endonucleolytic cleavage at a junction such as a reciprocal single-stranded crossover between two homologous DNA duplexes (Holliday junction).. Functionally, the RuvA-RuvB-RuvC complex processes Holliday junction (HJ) DNA during genetic recombination and DNA repair. Endonuclease that resolves HJ intermediates. Cleaves cruciform DNA by making single-stranded nicks across the HJ at symmetrical positions within the homologous arms, yielding a 5'-phosphate and a 3'-hydroxyl group; requires a central core of homology in the junction. The consensus cleavage sequence is 5'-(A/T)TT(C/G)-3'. Cleavage occurs on the 3'-side of the TT dinucleotide at the point of strand exchange. HJ branch migration catalyzed by RuvA-RuvB allows RuvC to scan DNA until it finds its consensus sequence, where it cleaves and resolves the cruciform DNA. In Synechococcus sp. (strain CC9605), this protein is Crossover junction endodeoxyribonuclease RuvC.